Reading from the N-terminus, the 96-residue chain is MATITKLDIIEYLSDKYHLSKQDTKNVVENFLEEIRLSLESGQDVKLSGFGNFELRDKSSRPGRNPKTGDVVPVSARRVVTFKPGQKLRARVEKTK.

Belongs to the bacterial histone-like protein family. In terms of assembly, heterodimer of an alpha and a beta chain.

Functionally, this protein is one of the two subunits of integration host factor, a specific DNA-binding protein that functions in genetic recombination as well as in transcriptional and translational control. This Haemophilus influenzae (strain 86-028NP) protein is Integration host factor subunit alpha.